A 78-amino-acid polypeptide reads, in one-letter code: Small ribosomal subunit protein bS18 (78 aa).

This sequence belongs to the bacterial ribosomal protein bS18 family. In terms of assembly, part of the 30S ribosomal subunit. Forms a tight heterodimer with protein bS6.

Its function is as follows. Binds as a heterodimer with protein bS6 to the central domain of the 16S rRNA, where it helps stabilize the platform of the 30S subunit. This is Small ribosomal subunit protein bS18 from Lactobacillus acidophilus (strain ATCC 700396 / NCK56 / N2 / NCFM).